The sequence spans 542 residues: Signal peptide peptidase-like 5 (542 aa).

The first 23 residues, 1 to 23, serve as a signal peptide directing secretion; that stretch reads MAAATAAVFALLMASALAGAAAG. Residues 24–192 lie on the Lumenal side of the membrane; the sequence is GDIVHHDDEA…PDRPVVDTAE (169 aa). Asparagine 79 and asparagine 145 each carry an N-linked (GlcNAc...) asparagine glycan. Residues 92–167 enclose the PA domain; it reads CTSPKEKVSG…LPRDAGFALH (76 aa). The helical transmembrane segment at 193-213 threads the bilayer; it reads VFLWLMAVGTVLCASYWSAWS. The Cytoplasmic segment spans residues 214-245; that stretch reads AREALCEQEKLLKDGREVLLNVENGSSSGMID. Residues 246–266 form a helical membrane-spanning segment; it reads INVASAIMFVVVASCFLIMLY. The Lumenal segment spans residues 267–275; that stretch reads KMMSSWFVE. The helical transmembrane segment at 276-296 threads the bilayer; it reads LLVVIFCVGGVEGLQTCLVAL. Over 297–316 the chain is Cytoplasmic; that stretch reads LSRWFRAASESFFKVPFFGA. The helical transmembrane segment at 317–337 threads the bilayer; it reads VSYLTLAVSPFCIVFAVLWAV. Residues 338-342 are Lumenal-facing; it reads HRHFT. Residues 343-363 form a helical membrane-spanning segment; sequence YAWIGQDILGIALIITVIQIV. Residues 364-367 lie on the Cytoplasmic side of the membrane; that stretch reads RVPN. Residues 368–388 traverse the membrane as a helical segment; sequence LKVGSVLLSCAFFYDIFWVFV. The active site involves aspartate 382. Residues 389-426 lie on the Lumenal side of the membrane; that stretch reads SKRWFHESVMIVVARGDKTDEDGVPMLLKIPRMFDPWG. The helical transmembrane segment at 427–447 threads the bilayer; it reads GYSIIGFGDILLPGLLVAFAL. Aspartate 435 is a catalytic residue. At 448 to 459 the chain is on the cytoplasmic side; the sequence is RYDWAAKKSLQT. Residues 460 to 480 form a helical membrane-spanning segment; it reads GYFLWSMVAYGSGLLITYVAL. Over 481–486 the chain is Lumenal; that stretch reads NLMDGH. The chain crosses the membrane as a helical span at residues 487 to 507; the sequence is GQPALLYIVPFTLGALISLGW. A PAL motif is present at residues 489-491; it reads PAL. The Cytoplasmic portion of the chain corresponds to 508 to 542; the sequence is KRGELWNLWSKGEPERVCPHHMHMQPQPKTPPLVQ.

This sequence belongs to the peptidase A22B family. Post-translationally, glycosylated.

The protein resides in the endosome membrane. Functionally, intramembrane-cleaving aspartic protease (I-CLiP) that cleaves type II membrane signal peptides in the hydrophobic plane of the membrane. The chain is Signal peptide peptidase-like 5 (SPPL5) from Oryza sativa subsp. japonica (Rice).